A 444-amino-acid chain; its full sequence is Platelet-activating factor acetylhydrolase (444 aa).

A signal peptide spans 1–21; it reads MLPPKLHALFCLCSCLTLVHP. 2 N-linked (GlcNAc...) asparagine glycosylation sites follow: N60 and N200. S274 functions as the Nucleophile in the catalytic mechanism. Catalysis depends on charge relay system residues D297 and H352. N424 carries N-linked (GlcNAc...) asparagine glycosylation.

Belongs to the AB hydrolase superfamily. Lipase family. Post-translationally, N-glycosylated. In terms of tissue distribution, plasma.

It localises to the secreted. The protein resides in the extracellular space. The catalysed reaction is a 1-O-alkyl-2-acetyl-sn-glycero-3-phosphocholine + H2O = a 1-O-alkyl-sn-glycero-3-phosphocholine + acetate + H(+). It carries out the reaction 1-O-decyl-2-acetyl-sn-glycero-3-phosphocholine + H2O = 1-O-decyl-sn-glycero-3-phosphocholine + acetate + H(+). The enzyme catalyses 1-O-dodecyl-2-acetyl-sn-glycero-3-phosphocholine + H2O = 1-O-dodecyl-sn-glycero-3-phosphocholine + acetate + H(+). It catalyses the reaction 1-O-tetradecyl-2-acetyl-sn-glycero-3-phosphocholine + H2O = 1-O-tetradecyl-sn-glycero-3-phosphocholine + acetate + H(+). The catalysed reaction is 1-O-hexadecyl-2-acetyl-sn-glycero-3-phosphocholine + H2O = 1-O-hexadecyl-sn-glycero-3-phosphocholine + acetate + H(+). It carries out the reaction 1-O-octadecyl-2-acetyl-sn-glycero-3-phosphocholine + H2O = 1-O-octadecyl-sn-glycero-3-phosphocholine + acetate + H(+). The enzyme catalyses 1-hexadecanoyl-2-acetyl-sn-glycero-3-phosphocholine + H2O = 1-hexadecanoyl-sn-glycero-3-phosphocholine + acetate + H(+). It catalyses the reaction 1-hexadecanoyl-2-propionyl-sn-glycero-3-phosphocholine + H2O = propanoate + 1-hexadecanoyl-sn-glycero-3-phosphocholine + H(+). The catalysed reaction is 1-hexadecanoyl-2-butanoyl-sn-glycero-3-phosphocholine + H2O = butanoate + 1-hexadecanoyl-sn-glycero-3-phosphocholine + H(+). It carries out the reaction 1-hexadecanoyl-2-pentanoyl-sn-glycero-3-phosphocholine + H2O = pentanoate + 1-hexadecanoyl-sn-glycero-3-phosphocholine + H(+). The enzyme catalyses 1-hexadecanoyl-2-glutaroyl-sn-glycero-3-phosphocholine + H2O = glutarate + 1-hexadecanoyl-sn-glycero-3-phosphocholine + H(+). It catalyses the reaction 1-hexadecanoyl-2-(5-oxopentanoyl)-sn-glycero-3-phosphocholine + H2O = 5-oxopentanoate + 1-hexadecanoyl-sn-glycero-3-phosphocholine + H(+). The catalysed reaction is 1-hexadecanoyl-2-(9-oxononanoyl)-sn-glycero-3-phosphocholine + H2O = 9-oxononanoate + 1-hexadecanoyl-sn-glycero-3-phosphocholine + H(+). It carries out the reaction 1-hexadecanoyl-2-[9-hydroperoxy-(10E-octadecenoyl)]-sn-glycero-3-phosphocholine + H2O = 9-hydroperoxy-10E-octadecenoate + 1-hexadecanoyl-sn-glycero-3-phosphocholine + H(+). The enzyme catalyses 1-hexadecanoyl-2-(10-hydroperoxy-8E-octadecenoyl)-sn-glycero-3-phosphocholine + H2O = 10-hydroperoxy-(8E)-octadecenoate + 1-hexadecanoyl-sn-glycero-3-phosphocholine + H(+). Its function is as follows. Lipoprotein-associated calcium-independent phospholipase A2 involved in phospholipid catabolism during inflammatory and oxidative stress response. At the lipid-aqueous interface, hydrolyzes the ester bond of fatty acyl group attached at sn-2 position of phospholipids (phospholipase A2 activity). Specifically targets phospholipids with a short-chain fatty acyl group at sn-2 position. Can hydrolyze phospholipids with long fatty acyl chains, only if they carry oxidized functional groups. Hydrolyzes and inactivates platelet-activating factor (PAF, 1-O-alkyl-2-acetyl-sn-glycero-3-phosphocholine), a potent pro-inflammatory signaling lipid that acts through PTAFR on various innate immune cells. Hydrolyzes oxidatively truncated phospholipids carrying an aldehyde group at omega position, preventing their accumulation in low-density lipoprotein (LDL) particles and uncontrolled pro-inflammatory effects. As part of high-density lipoprotein (HDL) particles, can hydrolyze phospholipids having long-chain fatty acyl hydroperoxides at sn-2 position and protect against potential accumulation of these oxylipins in the vascular wall. Catalyzes the release from membrane phospholipids of F2-isoprostanes, lipid biomarkers of cellular oxidative damage. The chain is Platelet-activating factor acetylhydrolase (PLA2G7) from Canis lupus familiaris (Dog).